The primary structure comprises 116 residues: Protein Rev (116 aa).

Ser-5 is modified (phosphoserine; by host CK2). The segment at Leu-18–Asn-26 is homomultimerization. The interval Tyr-23–Gln-49 is disordered. Residues Thr-34–Arg-50 carry the Nuclear localization signal and RNA-binding (RRE) motif. The segment covering Gln-36–Gln-49 has biased composition (basic residues). A Nuclear export signal and binding to XPO1 motif is present at residues Leu-73–Asn-84. Residues Ser-86 to Glu-116 are disordered. Ser-92 and Ser-99 each carry phosphoserine; by host.

The protein belongs to the HIV-1 REV protein family. In terms of assembly, homomultimer; when bound to the RRE. Multimeric assembly is essential for activity and may involve XPO1. Binds to human KPNB1, XPO1, TNPO1, RANBP5 and IPO7. Interacts with the viral Integrase. Interacts with human KHDRBS1. Interacts with human NAP1; this interaction decreases Rev multimerization and stimulates its activity. Interacts with human DEAD-box helicases DDX3 and DDX24; these interactions may serve for viral RNA export to the cytoplasm and packaging, respectively. Interacts with human PSIP1; this interaction may inhibit HIV-1 DNA integration by promoting dissociation of the Integrase-LEDGF/p75 complex. Post-translationally, asymmetrically arginine dimethylated at one site by host PRMT6. Methylation impairs the RNA-binding activity and export of viral RNA from the nucleus to the cytoplasm. Phosphorylated by protein kinase CK2. Presence of, and maybe binding to the N-terminus of the regulatory beta subunit of CK2 is necessary for CK2-mediated Rev's phosphorylation.

Its subcellular location is the host nucleus. It is found in the host nucleolus. The protein localises to the host cytoplasm. Escorts unspliced or incompletely spliced viral pre-mRNAs (late transcripts) out of the nucleus of infected cells. These pre-mRNAs carry a recognition sequence called Rev responsive element (RRE) located in the env gene, that is not present in fully spliced viral mRNAs (early transcripts). This function is essential since most viral proteins are translated from unspliced or partially spliced pre-mRNAs which cannot exit the nucleus by the pathway used by fully processed cellular mRNAs. Rev itself is translated from a fully spliced mRNA that readily exits the nucleus. Rev's nuclear localization signal (NLS) binds directly to KPNB1/Importin beta-1 without previous binding to KPNA1/Importin alpha-1. KPNB1 binds to the GDP bound form of RAN (Ran-GDP) and targets Rev to the nucleus. In the nucleus, the conversion from Ran-GDP to Ran-GTP dissociates Rev from KPNB1 and allows Rev's binding to the RRE in viral pre-mRNAs. Rev multimerization on the RRE via cooperative assembly exposes its nuclear export signal (NES) to the surface. Rev can then form a complex with XPO1/CRM1 and Ran-GTP, leading to nuclear export of the complex. Conversion from Ran-GTP to Ran-GDP mediates dissociation of the Rev/RRE/XPO1/RAN complex, so that Rev can return to the nucleus for a subsequent round of export. Beside KPNB1, also seems to interact with TNPO1/Transportin-1, RANBP5/IPO5 and IPO7/RANBP7 for nuclear import. The nucleoporin-like HRB/RIP is an essential cofactor that probably indirectly interacts with Rev to release HIV RNAs from the perinuclear region to the cytoplasm. The chain is Protein Rev from Homo sapiens (Human).